The chain runs to 236 residues: Uridylate kinase (236 aa).

Lys-12–Gly-15 is a binding site for ATP. The interval Gly-20–Gly-25 is involved in allosteric activation by GTP. Gly-54 provides a ligand contact to UMP. 2 residues coordinate ATP: Gly-55 and Arg-59. Residues Asp-72 and Thr-133–Thr-140 contribute to the UMP site. Residues Asn-161, Tyr-166, and Asp-169 each coordinate ATP.

The protein belongs to the UMP kinase family. As to quaternary structure, homohexamer.

The protein resides in the cytoplasm. The enzyme catalyses UMP + ATP = UDP + ADP. It participates in pyrimidine metabolism; CTP biosynthesis via de novo pathway; UDP from UMP (UMPK route): step 1/1. With respect to regulation, allosterically activated by GTP. Inhibited by UTP. Catalyzes the reversible phosphorylation of UMP to UDP. This Alkaliphilus oremlandii (strain OhILAs) (Clostridium oremlandii (strain OhILAs)) protein is Uridylate kinase.